We begin with the raw amino-acid sequence, 276 residues long: MIKPKIALTIAGTDPTGGAGVMADLKSFHSCGVYGMGVVTSIVAQNTLGVQHIHNLNHQWVDEQLDSVFNDTLPHAIKTGMIATADTMETIRHYLMQHESIPYVIDPVMLAKSGDSLMDNNTKQNLQHTLLPLADVVTPNLPEAEEITGLTIDSEEKIMQAGRIFINEIGSKGVIIKGGHSNDADIAKDYLFTKEGVQTFENERFKTKHTHGTGCTFSAVITAELAKGRPLFEAVHKAKKFISMSIQYTPEIGRGRGPVNHFAYLKKEGLDDELSK.

Residue glutamine 45 participates in 4-amino-5-hydroxymethyl-2-methylpyrimidine binding.

The protein belongs to the ThiD family.

It carries out the reaction 4-amino-5-hydroxymethyl-2-methylpyrimidine + ATP = 4-amino-2-methyl-5-(phosphooxymethyl)pyrimidine + ADP + H(+). The catalysed reaction is 4-amino-2-methyl-5-(phosphooxymethyl)pyrimidine + ATP = 4-amino-2-methyl-5-(diphosphooxymethyl)pyrimidine + ADP. Its pathway is cofactor biosynthesis; thiamine diphosphate biosynthesis; 4-amino-2-methyl-5-diphosphomethylpyrimidine from 5-amino-1-(5-phospho-D-ribosyl)imidazole: step 2/3. It functions in the pathway cofactor biosynthesis; thiamine diphosphate biosynthesis; 4-amino-2-methyl-5-diphosphomethylpyrimidine from 5-amino-1-(5-phospho-D-ribosyl)imidazole: step 3/3. Catalyzes the phosphorylation of hydroxymethylpyrimidine phosphate (HMP-P) to HMP-PP, and of HMP to HMP-P. The sequence is that of Hydroxymethylpyrimidine/phosphomethylpyrimidine kinase (thiD) from Staphylococcus aureus (strain MRSA252).